The primary structure comprises 146 residues: Hemoglobin subunit beta (146 aa).

V1 carries the N-acetylvaline modification. Residues 2–146 (HLTDAEKAAI…VATALGHKYH (145 aa)) form the Globin domain. The residue at position 59 (K59) is an N6-acetyllysine. Residue H63 coordinates heme b. An N6-acetyllysine modification is found at K82. H92 lines the heme b pocket. Position 93 is an S-nitrosocysteine (C93). The residue at position 144 (K144) is an N6-acetyllysine.

It belongs to the globin family. As to quaternary structure, heterotetramer of two alpha chains and two beta chains. Red blood cells.

Functionally, involved in oxygen transport from the lung to the various peripheral tissues. This is Hemoglobin subunit beta (HBB) from Ondatra zibethicus (Muskrat).